A 243-amino-acid polypeptide reads, in one-letter code: 1-(5-phosphoribosyl)-5-[(5-phosphoribosylamino)methylideneamino] imidazole-4-carboxamide isomerase (243 aa).

D8 serves as the catalytic Proton acceptor. Catalysis depends on D129, which acts as the Proton donor.

It belongs to the HisA/HisF family.

The protein localises to the cytoplasm. The catalysed reaction is 1-(5-phospho-beta-D-ribosyl)-5-[(5-phospho-beta-D-ribosylamino)methylideneamino]imidazole-4-carboxamide = 5-[(5-phospho-1-deoxy-D-ribulos-1-ylimino)methylamino]-1-(5-phospho-beta-D-ribosyl)imidazole-4-carboxamide. It participates in amino-acid biosynthesis; L-histidine biosynthesis; L-histidine from 5-phospho-alpha-D-ribose 1-diphosphate: step 4/9. The sequence is that of 1-(5-phosphoribosyl)-5-[(5-phosphoribosylamino)methylideneamino] imidazole-4-carboxamide isomerase from Citrifermentans bemidjiense (strain ATCC BAA-1014 / DSM 16622 / JCM 12645 / Bem) (Geobacter bemidjiensis).